The following is a 120-amino-acid chain: MASPKETLQRRAARVRRQVKAVANGRPRLSVHRSSKNIYVQVIDDVRGVTIAAASTLDGDLKGKLKTGADSAAAAAVGKLVAERAVKAGVSEVVFDRGAFIYHGRVKALAEAAREGGLSF.

This sequence belongs to the universal ribosomal protein uL18 family. Part of the 50S ribosomal subunit; part of the 5S rRNA/L5/L18/L25 subcomplex. Contacts the 5S and 23S rRNAs.

Functionally, this is one of the proteins that bind and probably mediate the attachment of the 5S RNA into the large ribosomal subunit, where it forms part of the central protuberance. This chain is Large ribosomal subunit protein uL18, found in Brucella anthropi (strain ATCC 49188 / DSM 6882 / CCUG 24695 / JCM 21032 / LMG 3331 / NBRC 15819 / NCTC 12168 / Alc 37) (Ochrobactrum anthropi).